The chain runs to 494 residues: Zinc finger and SCAN domain-containing protein 30 (494 aa).

One can recognise an SCAN box domain in the interval 48 to 130 (RQKFRQFSYS…TMLEELEKEL (83 aa)). Lysine 197 participates in a covalent cross-link: Glycyl lysine isopeptide (Lys-Gly) (interchain with G-Cter in SUMO2). 7 consecutive C2H2-type zinc fingers follow at residues 301–323 (YECF…QRIH), 329–351 (YACK…QRIH), 357–379 (YECC…RRIH), 385–407 (YECG…KKIH), 413–435 (YECI…QRIH), 441–463 (YECN…QRIH), and 469–491 (YECS…QRTH).

Belongs to the krueppel C2H2-type zinc-finger protein family.

The protein localises to the nucleus. In terms of biological role, may be involved in transcriptional regulation. The polypeptide is Zinc finger and SCAN domain-containing protein 30 (ZSCAN30) (Homo sapiens (Human)).